The chain runs to 78 residues: Exodeoxyribonuclease 7 small subunit (78 aa).

Belongs to the XseB family. Heterooligomer composed of large and small subunits.

It is found in the cytoplasm. The enzyme catalyses Exonucleolytic cleavage in either 5'- to 3'- or 3'- to 5'-direction to yield nucleoside 5'-phosphates.. Bidirectionally degrades single-stranded DNA into large acid-insoluble oligonucleotides, which are then degraded further into small acid-soluble oligonucleotides. The sequence is that of Exodeoxyribonuclease 7 small subunit from Pediococcus pentosaceus (strain ATCC 25745 / CCUG 21536 / LMG 10740 / 183-1w).